We begin with the raw amino-acid sequence, 31 residues long: Nemertide alpha-5 (31 aa).

3 disulfides stabilise this stretch: Cys2–Cys16, Cys9–Cys20, and Cys15–Cys26. Pro28 and Pro29 each carry 4-hydroxyproline.

It belongs to the nemertide family. Confined to the epidermis and to the mucus layer.

It is found in the secreted. In terms of biological role, highly potent toxin against both insect and some mammalian sodium channels (Nav). It potently inhibits inactivation of insect sodium channels of B.germanica (BgNav1) (EC(50)=7.8 nM) and also delays the inactivation of mammalian Nav with potent activity on Nav1.3/SCN3A and Nav1.4/SCN4A (hNav1.1/SCN1A; EC(50)=102.1 nM, rNav1.2/SCN2A; EC(50)=156.1 nM, rNav1.3/SCN3A; EC(50)=9.4 nM, rNav1.4/SCN4A; EC(50)=15.4 nM, hNav1.5/SCN5A; EC(50)=132.7 nM, mNav1.6/SCN8A; EC(50)=66.9 nM, hNav1.9/SCN9A; EC(50)=73 nM). 1 uM is enough to completely inhibits the inactivation, resulting in sustained non-inactivating currents. In addition, the toxin significantly enhances the recovery from inactivation, and the open state is not required for the toxin to interact with the channel. In vivo, injection into brine shrimp (Artemia salina) stops movement or causes death after 24 hours (EC(50)=0.4 uM). In Ramphogordius pseudolacteus (Ribbon worm), this protein is Nemertide alpha-5.